The primary structure comprises 335 residues: Abasic site processing protein HMCES (335 aa).

The Nucleophile role is filled by C2. Thiazolidine linkage to a ring-opened DNA abasic site is present on C2. Over residues 24–39 (QGGRKWPNWRDGDSDK) the composition is skewed to basic and acidic residues. Residues 24 to 51 (QGGRKWPNWRDGDSDKYQPSYNKSPQSN) are disordered. Residues 40 to 51 (YQPSYNKSPQSN) are compositionally biased toward polar residues. The active site involves E129. The disordered stretch occupies residues 284–335 (LQNKSPKKEESHSIQSPKLSQFGAPPKKTSAGLMQQWLKKEDGEPSPKRAKK). Residues 321–335 (LKKEDGEPSPKRAKK) are compositionally biased toward basic and acidic residues.

The protein belongs to the SOS response-associated peptidase family. In terms of processing, ubiquitination of the hmces DNA-protein cross-link by rfwd3 may promotes its degradation.

The protein resides in the chromosome. With respect to regulation, formation and reversal of DNA-protein cross-link depends on DNA context. Catalyzes formation of the thiazolidine linkage in presence of abasic sites in single-stranded DNA. Mediates the reversal of the thiazolidine cross-link in presence of double stranded DNA. Its function is as follows. Sensor of abasic sites in single-stranded DNA (ssDNA) required to preserve genome integrity by promoting error-free repair of abasic sites. Acts as an enzyme that recognizes and binds abasic sites in ssDNA at replication forks and chemically modifies the lesion by forming a covalent cross-link with DNA: forms a stable thiazolidine linkage between a ring-opened abasic site and the alpha-amino and sulfhydryl substituents of its N-terminal catalytic cysteine residue. The hmces DNA-protein cross-link is then either reversed or degraded. Hmces is able to catalyze the reversal of its thiazolidine cross-link and cycle between a cross-link and a non-cross-linked state depending on DNA context: mediates self-reversal of the thiazolidine cross-link in double stranded DNA, allowing apex1 to initiate downstream repair of abasic sites. The hmces DNA-protein cross-link can also be degraded by the sprtn metalloprotease following unfolding by the brip1/fancj helicase. Promotes error-free repair of abasic sites by protecting abasic sites from translesion synthesis (TLS) polymerases and endonucleases that are error-prone and would generate mutations and double-strand breaks. Acts as a protease: mediates autocatalytic processing of its N-terminal methionine in order to expose the catalytic cysteine. The hmces DNA-protein cross-link is then either reversed or degraded. According to a model, the HMCES DNA-protein cross-link. The polypeptide is Abasic site processing protein HMCES (Xenopus tropicalis (Western clawed frog)).